The following is a 540-amino-acid chain: Chaperonin GroEL (540 aa).

Residues 29–32, 86–90, Gly413, 477–479, and Asp493 contribute to the ATP site; these read TLGP, DGTTT, and DAL.

It belongs to the chaperonin (HSP60) family. Forms a cylinder of 14 subunits composed of two heptameric rings stacked back-to-back. Interacts with the co-chaperonin GroES.

It is found in the cytoplasm. The catalysed reaction is ATP + H2O + a folded polypeptide = ADP + phosphate + an unfolded polypeptide.. In terms of biological role, together with its co-chaperonin GroES, plays an essential role in assisting protein folding. The GroEL-GroES system forms a nano-cage that allows encapsulation of the non-native substrate proteins and provides a physical environment optimized to promote and accelerate protein folding. The polypeptide is Chaperonin GroEL (Clostridium botulinum (strain Eklund 17B / Type B)).